The sequence spans 450 residues: Glucose-6-phosphate isomerase (450 aa).

Residue Glu-290 is the Proton donor of the active site. Residues His-311 and Lys-425 contribute to the active site.

It belongs to the GPI family.

The protein localises to the cytoplasm. It carries out the reaction alpha-D-glucose 6-phosphate = beta-D-fructose 6-phosphate. The protein operates within carbohydrate biosynthesis; gluconeogenesis. Its pathway is carbohydrate degradation; glycolysis; D-glyceraldehyde 3-phosphate and glycerone phosphate from D-glucose: step 2/4. Catalyzes the reversible isomerization of glucose-6-phosphate to fructose-6-phosphate. In Alkaliphilus metalliredigens (strain QYMF), this protein is Glucose-6-phosphate isomerase.